The primary structure comprises 342 residues: Holliday junction branch migration complex subunit RuvB (342 aa).

The interval 4–182 (TDRLLSAGRR…FGIPIRLQFY (179 aa)) is large ATPase domain (RuvB-L). ATP contacts are provided by leucine 21, arginine 22, glycine 63, lysine 66, threonine 67, threonine 68, arginine 172, tyrosine 182, and arginine 219. A Mg(2+)-binding site is contributed by threonine 67. Residues 183–253 (TVEELERVVS…VADQSLNRLE (71 aa)) are small ATPAse domain (RuvB-S). The interval 256 to 342 (NLGLDAMDRR…EAGQDGLFDV (87 aa)) is head domain (RuvB-H). Arginine 292, arginine 311, and arginine 316 together coordinate DNA.

Belongs to the RuvB family. As to quaternary structure, homohexamer. Forms an RuvA(8)-RuvB(12)-Holliday junction (HJ) complex. HJ DNA is sandwiched between 2 RuvA tetramers; dsDNA enters through RuvA and exits via RuvB. An RuvB hexamer assembles on each DNA strand where it exits the tetramer. Each RuvB hexamer is contacted by two RuvA subunits (via domain III) on 2 adjacent RuvB subunits; this complex drives branch migration. In the full resolvosome a probable DNA-RuvA(4)-RuvB(12)-RuvC(2) complex forms which resolves the HJ.

It localises to the cytoplasm. The enzyme catalyses ATP + H2O = ADP + phosphate + H(+). Its function is as follows. The RuvA-RuvB-RuvC complex processes Holliday junction (HJ) DNA during genetic recombination and DNA repair, while the RuvA-RuvB complex plays an important role in the rescue of blocked DNA replication forks via replication fork reversal (RFR). RuvA specifically binds to HJ cruciform DNA, conferring on it an open structure. The RuvB hexamer acts as an ATP-dependent pump, pulling dsDNA into and through the RuvAB complex. RuvB forms 2 homohexamers on either side of HJ DNA bound by 1 or 2 RuvA tetramers; 4 subunits per hexamer contact DNA at a time. Coordinated motions by a converter formed by DNA-disengaged RuvB subunits stimulates ATP hydrolysis and nucleotide exchange. Immobilization of the converter enables RuvB to convert the ATP-contained energy into a lever motion, pulling 2 nucleotides of DNA out of the RuvA tetramer per ATP hydrolyzed, thus driving DNA branch migration. The RuvB motors rotate together with the DNA substrate, which together with the progressing nucleotide cycle form the mechanistic basis for DNA recombination by continuous HJ branch migration. Branch migration allows RuvC to scan DNA until it finds its consensus sequence, where it cleaves and resolves cruciform DNA. The protein is Holliday junction branch migration complex subunit RuvB of Rhizorhabdus wittichii (strain DSM 6014 / CCUG 31198 / JCM 15750 / NBRC 105917 / EY 4224 / RW1) (Sphingomonas wittichii).